The chain runs to 449 residues: UNC93-like protein MFSD11 (449 aa).

A helical transmembrane segment spans residues 8 to 28; that stretch reads LFNIIILGVAFMFMFTAFQTC. The N-linked (GlcNAc...) asparagine glycan is linked to Asn40. 5 consecutive transmembrane segments (helical) span residues 53-73, 74-94, 96-116, 138-158, and 170-190; these read AIIYGVFSASNLITPPVVAIV, GPQLSMFASGLFYSMYIAVFN, PFPWSFYTASVFIGIAAAVLW, IFWALLQSSLFFGNLYVYFAW, and RTVFIALTVISLVGTVLFFLI. A Phosphoserine modification is found at Ser204. The next 6 membrane-spanning stretches (helical) occupy residues 239–259, 277–297, 309–329, 359–379, 385–405, and 410–430; these read MLLLSITTAYTGLELTFFSGV, LIGLSGIFIGIGEILGGSLFG, PVVLLGILVHFIAFYLIFLNM, FLLGLGDSCFNTQLLSILGFL, APAFAIFKFVQSICAAVAFFY, and LLHWQLLVMVIFGFFGTLSFF.

It belongs to the unc-93 family.

It is found in the membrane. This is UNC93-like protein MFSD11 (MFSD11) from Pongo abelii (Sumatran orangutan).